The chain runs to 174 residues: Acetolactate synthase small subunit (174 aa).

One can recognise an ACT domain in the interval 4–78; it reads TLSVLVQDEA…NILNVQDVTN (75 aa).

It belongs to the acetolactate synthase small subunit family. In terms of assembly, dimer of large and small chains.

It localises to the plastid. Its subcellular location is the chloroplast. The catalysed reaction is 2 pyruvate + H(+) = (2S)-2-acetolactate + CO2. It functions in the pathway amino-acid biosynthesis; L-isoleucine biosynthesis; L-isoleucine from 2-oxobutanoate: step 1/4. The protein operates within amino-acid biosynthesis; L-valine biosynthesis; L-valine from pyruvate: step 1/4. The protein is Acetolactate synthase small subunit (ilvH) of Porphyra purpurea (Red seaweed).